A 449-amino-acid polypeptide reads, in one-letter code: Trigger factor (449 aa).

The region spanning Gly162–Pro247 is the PPIase FKBP-type domain. The segment covering Ala427 to Lys438 has biased composition (basic residues). The segment at Ala427 to Lys449 is disordered. Residues Ser439–Lys449 show a composition bias toward basic and acidic residues.

This sequence belongs to the FKBP-type PPIase family. Tig subfamily.

Its subcellular location is the cytoplasm. It carries out the reaction [protein]-peptidylproline (omega=180) = [protein]-peptidylproline (omega=0). Involved in protein export. Acts as a chaperone by maintaining the newly synthesized protein in an open conformation. Functions as a peptidyl-prolyl cis-trans isomerase. The protein is Trigger factor of Lactobacillus gasseri (strain ATCC 33323 / DSM 20243 / BCRC 14619 / CIP 102991 / JCM 1131 / KCTC 3163 / NCIMB 11718 / NCTC 13722 / AM63).